A 383-amino-acid chain; its full sequence is S-adenosylmethionine synthase 1 (383 aa).

H15 provides a ligand contact to ATP. D17 contributes to the Mg(2+) binding site. E43 contributes to the K(+) binding site. L-methionine contacts are provided by E56 and Q99. Residues 99 to 109 are flexible loop; it reads QSPDIDLGVSR. ATP-binding positions include 162–164, 228–229, D237, 243–244, A260, and K264; these read DGK, RF, and RK. Residue D237 participates in L-methionine binding. K268 provides a ligand contact to L-methionine.

This sequence belongs to the AdoMet synthase family. Homotetramer; dimer of dimers. Requires Mg(2+) as cofactor. K(+) serves as cofactor.

It is found in the cytoplasm. It carries out the reaction L-methionine + ATP + H2O = S-adenosyl-L-methionine + phosphate + diphosphate. It functions in the pathway amino-acid biosynthesis; S-adenosyl-L-methionine biosynthesis; S-adenosyl-L-methionine from L-methionine: step 1/1. In terms of biological role, catalyzes the formation of S-adenosylmethionine (AdoMet) from methionine and ATP. The overall synthetic reaction is composed of two sequential steps, AdoMet formation and the subsequent tripolyphosphate hydrolysis which occurs prior to release of AdoMet from the enzyme. The sequence is that of S-adenosylmethionine synthase 1 from Rhodospirillum rubrum (strain ATCC 11170 / ATH 1.1.1 / DSM 467 / LMG 4362 / NCIMB 8255 / S1).